The following is a 557-amino-acid chain: Dihydroxy-acid dehydratase (557 aa).

D78 contacts Mg(2+). C119 is a [2Fe-2S] cluster binding site. Mg(2+)-binding residues include D120 and K121. An N6-carboxylysine modification is found at K121. C192 serves as a coordination point for [2Fe-2S] cluster. Residue E442 coordinates Mg(2+). S468 acts as the Proton acceptor in catalysis.

The protein belongs to the IlvD/Edd family. Homodimer. [2Fe-2S] cluster is required as a cofactor. The cofactor is Mg(2+).

The enzyme catalyses (2R)-2,3-dihydroxy-3-methylbutanoate = 3-methyl-2-oxobutanoate + H2O. The catalysed reaction is (2R,3R)-2,3-dihydroxy-3-methylpentanoate = (S)-3-methyl-2-oxopentanoate + H2O. Its pathway is amino-acid biosynthesis; L-isoleucine biosynthesis; L-isoleucine from 2-oxobutanoate: step 3/4. It participates in amino-acid biosynthesis; L-valine biosynthesis; L-valine from pyruvate: step 3/4. Its function is as follows. Functions in the biosynthesis of branched-chain amino acids. Catalyzes the dehydration of (2R,3R)-2,3-dihydroxy-3-methylpentanoate (2,3-dihydroxy-3-methylvalerate) into 2-oxo-3-methylpentanoate (2-oxo-3-methylvalerate) and of (2R)-2,3-dihydroxy-3-methylbutanoate (2,3-dihydroxyisovalerate) into 2-oxo-3-methylbutanoate (2-oxoisovalerate), the penultimate precursor to L-isoleucine and L-valine, respectively. The chain is Dihydroxy-acid dehydratase from Bacillus anthracis (strain A0248).